The sequence spans 72 residues: Variant surface glycoprotein MITAT 1.1000BC (72 aa).

A lipid anchor (GPI-anchor amidated aspartate) is attached at D50. Residues 51-72 (GSFLVNKKFALMVYDFVSLLAF) constitute a propeptide, removed in mature form.

The protein resides in the cell membrane. In terms of biological role, VSG forms a coat on the surface of the parasite. The trypanosome evades the immune response of the host by expressing a series of antigenically distinct VSGs from an estimated 1000 VSG genes. This chain is Variant surface glycoprotein MITAT 1.1000BC, found in Trypanosoma brucei brucei.